A 70-amino-acid polypeptide reads, in one-letter code: Large ribosomal subunit protein bL31 (70 aa).

Residues cysteine 16, cysteine 18, cysteine 37, and cysteine 40 each coordinate Zn(2+).

The protein belongs to the bacterial ribosomal protein bL31 family. Type A subfamily. As to quaternary structure, part of the 50S ribosomal subunit. The cofactor is Zn(2+).

Its function is as follows. Binds the 23S rRNA. The chain is Large ribosomal subunit protein bL31 from Histophilus somni (strain 2336) (Haemophilus somnus).